The primary structure comprises 590 residues: Arginine--tRNA ligase (590 aa).

Positions 131-141 match the 'HIGH' region motif; the sequence is PNIAKEMHVGH.

Belongs to the class-I aminoacyl-tRNA synthetase family. In terms of assembly, monomer.

The protein localises to the cytoplasm. The catalysed reaction is tRNA(Arg) + L-arginine + ATP = L-arginyl-tRNA(Arg) + AMP + diphosphate. In Synechococcus sp. (strain RCC307), this protein is Arginine--tRNA ligase.